Reading from the N-terminus, the 591-residue chain is Myelin expression factor 2 (591 aa).

The disordered stretch occupies residues 1–92 (MADADKSEAA…GEKKGPNRNR (92 aa)). The segment covering 22–36 (EPRRDTHPGEPEKPP) has biased composition (basic and acidic residues). Lys44 is covalently cross-linked (Glycyl lysine isopeptide (Lys-Gly) (interchain with G-Cter in SUMO2)). Composition is skewed to basic and acidic residues over residues 45–63 (MEND…EKST) and 74–87 (YSKD…EKKG). 2 consecutive RRM domains span residues 91–169 (NRVF…EDPD) and 224–301 (STIF…MDDK). An omega-N-methylarginine mark is found at Arg397 and Arg417. Position 422 is a phosphoserine (Ser422). An RRM 3 domain is found at 514–590 (NQIFVRNLPF…REIDVRLDRN (77 aa)).

As to quaternary structure, monomer. In terms of tissue distribution, highly expressed in the brain.

The protein localises to the nucleus. Functionally, transcriptional repressor of the myelin basic protein gene (MBP). Binds to the proximal MB1 element 5'-TTGTCC-3' of the MBP promoter. Its binding to MB1 and function are inhibited by PURA. The polypeptide is Myelin expression factor 2 (Myef2) (Mus musculus (Mouse)).